Reading from the N-terminus, the 87-residue chain is Large ribosomal subunit protein bL27 (87 aa).

The interval 1–22 is disordered; sequence MAHKKGQGSVKNGRDSRSKRLG.

This sequence belongs to the bacterial ribosomal protein bL27 family.

This is Large ribosomal subunit protein bL27 from Akkermansia muciniphila (strain ATCC BAA-835 / DSM 22959 / JCM 33894 / BCRC 81048 / CCUG 64013 / CIP 107961 / Muc).